A 249-amino-acid polypeptide reads, in one-letter code: tRNA pseudouridine synthase A (249 aa).

Asp53 acts as the Nucleophile in catalysis. Tyr111 contributes to the substrate binding site.

This sequence belongs to the tRNA pseudouridine synthase TruA family. As to quaternary structure, homodimer.

The catalysed reaction is uridine(38/39/40) in tRNA = pseudouridine(38/39/40) in tRNA. Formation of pseudouridine at positions 38, 39 and 40 in the anticodon stem and loop of transfer RNAs. The protein is tRNA pseudouridine synthase A of Streptococcus gordonii (strain Challis / ATCC 35105 / BCRC 15272 / CH1 / DL1 / V288).